A 609-amino-acid chain; its full sequence is Kelch domain-containing protein 10 homolog (609 aa).

Residues 103-146 are disordered; that stretch reads ASDLDEEEEEEDDDVDVDVDYGDTDSESEFEEMYSDEWTSSSDE. Positions 104 to 137 are enriched in acidic residues; that stretch reads SDLDEEEEEEDDDVDVDVDYGDTDSESEFEEMYS. Kelch repeat units follow at residues 214-277, 279-334, 335-381, 389-437, 458-508, and 510-554; these read HLYS…IHNN, LISH…IHKH, FLYT…RYRH, HIFV…GNRG, EAFI…HSDN, and CMYV…YNDN. Residues 576-609 form a disordered region; that stretch reads LPPQRRRRLDTSQPDPSMLISLYSNPKRARSSTQ.

As to quaternary structure, interacts with Elongin-C; may be the substrate recognition component of an E3 ubiquitin ligase complex.

Activates the Pk92B/DASK1-MAPK signaling cascade. The chain is Kelch domain-containing protein 10 homolog (slim) from Drosophila melanogaster (Fruit fly).